Reading from the N-terminus, the 236-residue chain is Lipoprotein B (236 aa).

The signal sequence occupies residues 1–27; the sequence is MNKKYFKKYSSILIFSMSILAPMTLAS. Cys-28 carries the N-palmitoyl cysteine lipid modification. Cys-28 carries the S-diacylglycerol cysteine lipid modification. 2 disordered regions span residues 35–112 and 134–236; these read EKDK…KSNV and SEKQ…GDAF. The span at 43-60 shows a compositional bias: polar residues; sequence STNLSEPNKSNTSKTNTF. The segment covering 61–74 has biased composition (basic and acidic residues); sequence QDKKDSTNKIDSQE. Composition is skewed to polar residues over residues 75–112 and 143–157; these read SSKTQSQNTSESNQNTKVDSSKTNNLATNQNNPSKSNV and NASSLNSKQINNTLK. Residues 158–175 are compositionally biased toward basic and acidic residues; sequence NQDKTKQENDQFKQESKD. Residues 193-212 show a composition bias toward polar residues; it reads VISSQSTTRLEMPKNDQSNS. Positions 215–228 are enriched in basic and acidic residues; that stretch reads EDNKKSPESPKWWE.

This sequence belongs to the M.pulmonis LipAB lipoprotein family.

It is found in the cell membrane. The protein is Lipoprotein B (lipB) of Mycoplasmopsis pulmonis (strain UAB CTIP) (Mycoplasma pulmonis).